Reading from the N-terminus, the 451-residue chain is tRNA modification GTPase MnmE (451 aa).

(6S)-5-formyl-5,6,7,8-tetrahydrofolate contacts are provided by Arg37, Glu95, and Lys135. The TrmE-type G domain occupies Gly232–Gly376. Asn242 contributes to the K(+) binding site. GTP-binding positions include Asn242–Thr247, Ser261–Thr267, and Asp286–Gly289. A Mg(2+)-binding site is contributed by Ser246. Positions 261, 263, and 266 each coordinate K(+). Residue Thr267 participates in Mg(2+) binding. (6S)-5-formyl-5,6,7,8-tetrahydrofolate is bound at residue Lys451.

Belongs to the TRAFAC class TrmE-Era-EngA-EngB-Septin-like GTPase superfamily. TrmE GTPase family. Homodimer. Heterotetramer of two MnmE and two MnmG subunits. The cofactor is K(+).

It localises to the cytoplasm. Its function is as follows. Exhibits a very high intrinsic GTPase hydrolysis rate. Involved in the addition of a carboxymethylaminomethyl (cmnm) group at the wobble position (U34) of certain tRNAs, forming tRNA-cmnm(5)s(2)U34. The sequence is that of tRNA modification GTPase MnmE from Beijerinckia indica subsp. indica (strain ATCC 9039 / DSM 1715 / NCIMB 8712).